The following is a 697-amino-acid chain: Phenoloxidase 1 (697 aa).

A propeptide spans Met-1–Val-101 (removed by PPAE1). Cu cation-binding residues include His-217, His-221, and His-247. N-linked (GlcNAc...) asparagine glycosylation is found at Asn-260 and Asn-313. The active-site Proton acceptor is Glu-355. His-370, His-374, and His-410 together coordinate Cu cation. N-linked (GlcNAc...) asparagine glycosylation is found at Asn-498 and Asn-552. 2 cysteine pairs are disulfide-bonded: Cys-587-Cys-631 and Cys-589-Cys-638.

The protein belongs to the tyrosinase family. Heterodimer. The cofactor is Cu(2+). In terms of processing, activated by the cleavage of the N-terminal propeptide by PPAE1. In terms of tissue distribution, expressed in hemocytes.

The protein resides in the secreted. The enzyme catalyses L-tyrosine + O2 = L-dopaquinone + H2O. The catalysed reaction is 2 L-dopa + O2 = 2 L-dopaquinone + 2 H2O. Activated by a cationic detergent cetyl pyridinium chloride (CPC). Inhibited by phenyl thio-urea (PTU). Its function is as follows. This is a copper-containing oxidase that functions in the formation of pigments such as melanins and other polyphenolic compounds. Catalyzes the rate-limiting conversions of tyrosine to DOPA, DOPA to DOPA-quinone and possibly 5,6 dihydroxyindole to indole-5'6 quinone. Catalyzes the oxidation of 4-methylcatechol. Binds to the surface of hemocytes and is involved in hemocyte melanization. This Spodoptera litura (Asian cotton leafworm) protein is Phenoloxidase 1.